A 405-amino-acid polypeptide reads, in one-letter code: 26S proteasome regulatory subunit 8 homolog (405 aa).

Thr-2 bears the N-acetylthreonine mark. ATP is bound at residue 189-196 (GPPGTGKT).

This sequence belongs to the AAA ATPase family. As to quaternary structure, may form a homodimer or a heterodimer with a related family member. Interacts with OLA1, TMA17, and UBR1. Post-translationally, N-acetylated by NAT1.

The protein localises to the cytoplasm. It is found in the nucleus. In terms of biological role, the 26S proteasome is involved in the ATP-dependent degradation of ubiquitinated proteins. The regulatory (or ATPase) complex confers ATP dependency and substrate specificity to the 26S complex. This Saccharomyces cerevisiae (strain ATCC 204508 / S288c) (Baker's yeast) protein is 26S proteasome regulatory subunit 8 homolog (RPT6).